The following is a 312-amino-acid chain: CD-NTase-associated protein 12 (312 aa).

The TIR domain maps to Arg5–Asp127.

In the C-terminal section; belongs to the bacterial STING family. Forms homodimers; in the presence of c-di-GMP forms filaments with an ordered array of parallel-stacked subunits.

It carries out the reaction NAD(+) + H2O = ADP-D-ribose + nicotinamide + H(+). With respect to regulation, NAD(+) hydrolase activity is strongly stimulated by c-di-GMP, weakly by 3'3'-cGAMP, very weakly by c-di-AMP but not at all by 2'3'-cGAMP. Self-association of TIR domains is required for NADase activity. Functionally, effector protein of a CBASS antiviral system with NAD(+) hydrolase activity. CBASS (cyclic oligonucleotide-based antiphage signaling system) provides immunity against bacteriophage. The CD-NTase protein synthesizes cyclic nucleotides in response to infection; these serve as specific second messenger signals. The signals activate a diverse range of effectors, leading to bacterial cell death and thus abortive phage infection. A type I-D CBASS(GG) system. Its function is as follows. Binds c-di-GMP, does not bind cUMP-AMP. Upon activation by c-di-GMP forms filaments which hydrolyze NAD(+); filament formation is required for enzyme activation. This Niabella drilacis (strain DSM 25811 / CCM 8410 / CCUG 62505 / LMG 26954 / E90) protein is CD-NTase-associated protein 12.